Here is a 175-residue protein sequence, read N- to C-terminus: RNA pyrophosphohydrolase (175 aa).

The region spanning 6–149 is the Nudix hydrolase domain; it reads GYRPNVGIVI…KRDVYRRVMK (144 aa). Positions 38-59 match the Nudix box motif; sequence GGINAGETAEQAMYRELFEEVG.

The protein belongs to the Nudix hydrolase family. RppH subfamily. It depends on a divalent metal cation as a cofactor.

Its function is as follows. Accelerates the degradation of transcripts by removing pyrophosphate from the 5'-end of triphosphorylated RNA, leading to a more labile monophosphorylated state that can stimulate subsequent ribonuclease cleavage. The protein is RNA pyrophosphohydrolase of Sodalis glossinidius (strain morsitans).